A 907-amino-acid chain; its full sequence is NADH-quinone oxidoreductase subunit G (907 aa).

Positions 1–83 constitute a 2Fe-2S ferredoxin-type domain; the sequence is MTIIFVDNEE…GMIVSTSDKI (83 aa). Positions 34, 45, 48, and 67 each coordinate [2Fe-2S] cluster. The 40-residue stretch at 83-122 folds into the 4Fe-4S His(Cys)3-ligated-type domain; the sequence is ISRNFRKGIIELLMLNHPHDCPICEEGGSCHLQDMTVMAG. His99, Cys103, Cys106, Cys112, Cys151, Cys154, Cys157, Cys201, Cys228, Cys231, Cys235, and Cys263 together coordinate [4Fe-4S] cluster. Residues 221–277 form the 4Fe-4S Mo/W bis-MGD-type domain; that stretch reads MQYAPSICQHCCVGCNISVGEKYGKISRIENRYHNAINHYFLCDLGRFSYDYSNVDE.

The protein belongs to the complex I 75 kDa subunit family. Composed of 13 different subunits. Subunits NuoCD, E, F, and G constitute the peripheral sector of the complex. It depends on [2Fe-2S] cluster as a cofactor. [4Fe-4S] cluster is required as a cofactor.

It carries out the reaction a quinone + NADH + 5 H(+)(in) = a quinol + NAD(+) + 4 H(+)(out). NDH-1 shuttles electrons from NADH, via FMN and iron-sulfur (Fe-S) centers, to quinones in the respiratory chain. Couples the redox reaction to proton translocation (for every two electrons transferred, four hydrogen ions are translocated across the cytoplasmic membrane), and thus conserves the redox energy in a proton gradient. The protein is NADH-quinone oxidoreductase subunit G (nuoG) of Buchnera aphidicola subsp. Baizongia pistaciae (strain Bp).